We begin with the raw amino-acid sequence, 363 residues long: DNA replication and repair protein RecF (363 aa).

30–37 (GDNAQGKT) contacts ATP.

Belongs to the RecF family.

Its subcellular location is the cytoplasm. In terms of biological role, the RecF protein is involved in DNA metabolism; it is required for DNA replication and normal SOS inducibility. RecF binds preferentially to single-stranded, linear DNA. It also seems to bind ATP. The sequence is that of DNA replication and repair protein RecF from Syntrophotalea carbinolica (strain DSM 2380 / NBRC 103641 / GraBd1) (Pelobacter carbinolicus).